The sequence spans 254 residues: RNA polymerase sigma factor SigI8 (254 aa).

Positions 61 to 74 match the Polymerase core binding motif; that stretch reads DEYSIALIAFNEAI. The segment at residues 209-228 is a DNA-binding region (H-T-H motif); that stretch reads YKELTERFNLCRRTLEKNRK.

It belongs to the sigma-70 factor family. SigI subfamily. As to quaternary structure, interacts with RsgI8.

It localises to the cytoplasm. Its activity is regulated as follows. Negatively regulated by the anti-sigma-I factor RsgI8. Functionally, sigma factors are initiation factors that promote the attachment of RNA polymerase to specific initiation sites and are then released. The sequence is that of RNA polymerase sigma factor SigI8 from Acetivibrio thermocellus (strain ATCC 27405 / DSM 1237 / JCM 9322 / NBRC 103400 / NCIMB 10682 / NRRL B-4536 / VPI 7372) (Clostridium thermocellum).